Here is a 572-residue protein sequence, read N- to C-terminus: SHUGOSHIN 1 (572 aa).

The stretch at 59-110 (KHQQQAILISSKENAENLQKENTKLMKVVMERDGIKSDLKKLRIEFQKVQEQ) forms a coiled coil. Disordered stretches follow at residues 185-221 (DADHEHASGSSNANSLQRNEKANSKRRVSGRKNPANS), 244-285 (KLVS…QTET), 333-352 (ARLKSQEPEPSESFHDSIET), and 484-572 (SRRQ…RGGF). Positions 192–201 (SGSSNANSLQ) are enriched in polar residues. 4 stretches are compositionally biased toward basic and acidic residues: residues 244-257 (KLVSDSDNDAENHI), 336-352 (KSQEPEPSESFHDSIET), 523-542 (ELKRESKKKPTGDESEEMRK), and 552-572 (AAEKIKSYKEPSLKEKMRGGF).

This sequence belongs to the shugoshin family.

Its function is as follows. Protects sister chromatid centromere cohesion in meiosis I but not through the protection of the cohesin SYN1. Required with SGO2 for full protection of centromeric cohesion during anaphase I. Required to prevent precocious release of pericentromeric cohesins during meiosis. Not necessary for the maintenance of the synaptonemal complex (SC). Not required for monopolar spindle orientation in meiosis I. In Arabidopsis thaliana (Mouse-ear cress), this protein is SHUGOSHIN 1.